A 188-amino-acid polypeptide reads, in one-letter code: Protein-export protein SecB (188 aa).

Disordered stretches follow at residues 1-21 and 160-188; these read MADE…EQPK and RQKA…DTQQ. The segment covering 176-188 has biased composition (polar residues); the sequence is SDSTAAQGSDTQQ.

The protein belongs to the SecB family. In terms of assembly, homotetramer, a dimer of dimers. One homotetramer interacts with 1 SecA dimer.

The protein resides in the cytoplasm. In terms of biological role, one of the proteins required for the normal export of preproteins out of the cell cytoplasm. It is a molecular chaperone that binds to a subset of precursor proteins, maintaining them in a translocation-competent state. It also specifically binds to its receptor SecA. The sequence is that of Protein-export protein SecB from Alkalilimnicola ehrlichii (strain ATCC BAA-1101 / DSM 17681 / MLHE-1).